The primary structure comprises 216 residues: Ornithine decarboxylase antizyme 1 (216 aa).

This sequence belongs to the ODC antizyme family. In terms of assembly, interacts with ODC1 and thereby sterically blocks ODC homodimerization.

Its function is as follows. Ornithine decarboxylase (ODC) antizyme protein that negatively regulates ODC activity and intracellular polyamine biosynthesis and uptake in response to increased intracellular polyamine levels. Binds to ODC monomers, inhibiting the assembly of the functional ODC homodimer, and targets the monomers for ubiquitin-independent proteolytic destruction by the 26S proteasome. The protein is Ornithine decarboxylase antizyme 1 (oaz1) of Xenopus laevis (African clawed frog).